Consider the following 118-residue polypeptide: DNA-binding protein SSO0352 (118 aa).

It belongs to the PDCD5 family.

This is DNA-binding protein SSO0352 from Saccharolobus solfataricus (strain ATCC 35092 / DSM 1617 / JCM 11322 / P2) (Sulfolobus solfataricus).